The chain runs to 155 residues: MAKGEGKVVAQNKKARHDYTIVDTIEAGMVLTGTEIKSVRAARINLKDGFAQIKNGEAWLSNVHIAPYEEGNIWNQEPERRRKLLLHKKQIQKLEQETKGTGMTLVPLKVYLKDGYAKLLLGLAKGKHDYDKRESIKRREQNRDIARQMKNFNTR.

The protein belongs to the SmpB family.

The protein resides in the cytoplasm. Functionally, required for rescue of stalled ribosomes mediated by trans-translation. Binds to transfer-messenger RNA (tmRNA), required for stable association of tmRNA with ribosomes. tmRNA and SmpB together mimic tRNA shape, replacing the anticodon stem-loop with SmpB. tmRNA is encoded by the ssrA gene; the 2 termini fold to resemble tRNA(Ala) and it encodes a 'tag peptide', a short internal open reading frame. During trans-translation Ala-aminoacylated tmRNA acts like a tRNA, entering the A-site of stalled ribosomes, displacing the stalled mRNA. The ribosome then switches to translate the ORF on the tmRNA; the nascent peptide is terminated with the 'tag peptide' encoded by the tmRNA and targeted for degradation. The ribosome is freed to recommence translation, which seems to be the essential function of trans-translation. The protein is SsrA-binding protein of Streptococcus sanguinis (strain SK36).